Here is a 474-residue protein sequence, read N- to C-terminus: 4-O-methyl-glucuronoyl methylesterase (474 aa).

A signal peptide spans 1 to 17 (MFKPSFVALALVSYATA). The CBM1 domain maps to 19-55 (ASAPQWGQCGGIGWTGPTACPSGWACQQLNAYYSQCL). A disordered region spans residues 61–91 (APARTTAAPPPPPATTAAPPPPTTSAPTGSS). Residues 68 to 84 (APPPPPATTAAPPPPTT) are compositionally biased toward pro residues. A glycan (N-linked (GlcNAc...) asparagine) is linked at asparagine 120. The short motif at 284-289 (GCSRDG) is the GXSYXG catalytic site motif element. 2 disulfides stabilise this stretch: cysteine 285-cysteine 421 and cysteine 317-cysteine 393. Residue serine 286 is the Nucleophile of the active site. Lysine 290, glutamine 332, glutamate 340, and tryptophan 384 together coordinate substrate. Catalysis depends on histidine 420, which acts as the Proton donor/acceptor.

It belongs to the carbohydrate esterase 15 (CE15) family. In terms of processing, N-glycosylated.

It localises to the secreted. It catalyses the reaction a 4-O-methyl-alpha-D-glucuronosyl ester derivative + H2O = 4-O-methyl-alpha-D-glucuronate derivative + an alcohol + H(+). Functionally, glucuronoyl esterase which may play a significant role in biomass degradation, as it is considered to disconnect hemicellulose from lignin through the hydrolysis of the ester bond between 4-O-methyl-D-glucuronic acid residues of glucuronoxylans and aromatic alcohols of lignin. The chain is 4-O-methyl-glucuronoyl methylesterase from Cerrena unicolor (Canker rot fungus).